The sequence spans 1016 residues: C2 domain-containing protein 5 (1016 aa).

The C2 domain maps to 1–109 (MPGKLKVKIV…EAATVISGWF (109 aa)). Ca(2+) contacts are provided by aspartate 19, aspartate 26, aspartate 76, aspartate 78, serine 81, and aspartate 84. Serine 197 carries the phosphoserine; by PKB/AKT2 modification. Phosphoserine occurs at positions 200 and 260. Positions 265 to 330 (LKEIPFNEDP…SGSAGKEGGP (66 aa)) are disordered. Positions 274–289 (PNPNTHSSGPSTPLKN) are enriched in polar residues. Residues 290-318 (QTYSFSPSKSYSRQSSSSDTDLSLTPKTG) show a composition bias toward low complexity. Phosphoserine occurs at positions 293, 295, 304, 305, and 306. At threonine 317 the chain carries Phosphothreonine. Residues 319–328 (MGSGSAGKEG) show a composition bias toward gly residues. Phosphoserine is present on serine 323. A Phosphothreonine modification is found at threonine 601. The segment at 636-668 (VSEEMIGSPIPEPRQRSRLLRSQSESSDEVTEL) is disordered. A phosphoserine mark is found at serine 643, serine 657, serine 659, serine 661, and serine 662. Phosphothreonine is present on threonine 666. 3 positions are modified to phosphoserine: serine 671, serine 817, and serine 869.

It depends on Ca(2+) as a cofactor. Post-translationally, phosphorylated on Ser-197 by active myristoylated kinase AKT2; insulin-stimulated phosphorylation by AKT2 regulates SLC2A4/GLUT4 translocation into the plasma membrane. As to expression, expressed in liver, muscle and fat.

It localises to the cytoplasmic vesicle membrane. Its subcellular location is the cytoplasm. It is found in the cell cortex. The protein localises to the cell membrane. The protein resides in the cell projection. It localises to the ruffle. In terms of biological role, required for insulin-stimulated glucose transport and glucose transporter SLC2A4/GLUT4 translocation from intracellular glucose storage vesicle (GSV) to the plasma membrane (PM) in adipocytes. Binds phospholipid membranes in a calcium-dependent manner and is necessary for the optimal membrane fusion between SLC2A4/GLUT4 GSV and the PM. The polypeptide is C2 domain-containing protein 5 (C2cd5) (Mus musculus (Mouse)).